Reading from the N-terminus, the 943-residue chain is Protein translocase subunit SecA (943 aa).

ATP is bound by residues Q90, 108–112 (GEGKT), and D509. Residues 534–576 (KPDNEHKPPIPQQRSSKAGGGFASKSESISNKNSKSSGASLFP) are disordered. Residues 556–570 (ASKSESISNKNSKSS) show a composition bias toward low complexity.

This sequence belongs to the SecA family. As to quaternary structure, monomer and homodimer. Part of the essential Sec protein translocation apparatus which comprises SecA, SecYEG and auxiliary proteins SecDF. Other proteins may also be involved.

The protein resides in the cell inner membrane. The protein localises to the cellular thylakoid membrane. It is found in the cytoplasm. It catalyses the reaction ATP + H2O + cellular proteinSide 1 = ADP + phosphate + cellular proteinSide 2.. Functionally, part of the Sec protein translocase complex. Interacts with the SecYEG preprotein conducting channel. Has a central role in coupling the hydrolysis of ATP to the transfer of proteins into and across the cell membrane, serving as an ATP-driven molecular motor driving the stepwise translocation of polypeptide chains across the membrane. Probably participates in protein translocation into and across both the cytoplasmic and thylakoid membranes in cyanobacterial cells. The protein is Protein translocase subunit SecA of Prochlorococcus marinus (strain MIT 9515).